We begin with the raw amino-acid sequence, 750 residues long: MHTGGETSACKPSSVRLAPSFSFHAAGLQMAGQMSHSHQQYSDRHQQNLNDQQASALPYNDQTPQPLPNQRRMPQTFRDPATAPLRKLSVDLIKTYKHINEVYYAKKKRRHQQGQGDDSSHKKERKVYNDGYDDDNYDYIVKNGEKWMDRYEIDSLIGKGSFGQVVKAYDRVEQEWVAIKIIKNKKAFLNQAQIEVRLLELMNKHDTEMKYYIVHLKRHFMFRNHLCLVFEMLSYNLYDLLRNTNFRGVSLNLTRKFAQQMCTALLFLATPELSIIHCDLKPENILLCNPKRSAIKIVDFGSSCQLGQRIYQYIQSRFYRSPEVLLGTPYDLAIDMWSLGCILVEMHTGEPLFSGANEVDQMSKIVEVLGIPPAHILDQAPKARKFFEKMPEGTWNLKKTKDGKKEYKPPGTRKLHNILGVENGGPGGRRAGESGHTVADYLKFKDVILRMLDYDAKTRIQPYYALQHSFFKKTADEGTNTSNSVSTSPAMEQSQSSGTTSSTSSSSGGSSGTSNSGRARSDPTHQHRHSGGHFTTAVAMDCETHSPQVRQQFPPGWTVPEAPTQVTIETHPVQETTFHVPPSQKNVPHHHGNGSHHHHHHHHHHHGQHILSNRTRTRIYNSPSTSSSTQDSMDIGNSHHSMTSLSSSTTSSSTSSSSTGNQGNQAYQNRPVAANTLDFGQNGTLDVNLTVYSNPRQETGITGHPDYQYSANTGPGHYVTEGQLTMRQGIDREDSPMTGVCVQQSPVASS.

Disordered stretches follow at residues 56 to 81 (ALPY…RDPA) and 104 to 129 (YAKK…KVYN). Positions 109–126 (RRHQQGQGDDSSHKKERK) match the Bipartite nuclear localization signal motif. The Protein kinase domain occupies 151–471 (YEIDSLIGKG…PYYALQHSFF (321 aa)). Residues 157–165 (IGKGSFGQV), Lys180, and 230–233 (FEML) contribute to the ATP site. The Proton acceptor role is filled by Asp279. Disordered regions lie at residues 400–434 (TKDG…AGES), 477–531 (EGTN…RHSG), 583–666 (SQKN…GNQA), and 731–750 (DRED…VASS). Polar residues predominate over residues 477–493 (EGTNTSNSVSTSPAMEQ). Over residues 494-517 (SQSSGTTSSTSSSSGGSSGTSNSG) the composition is skewed to low complexity. The histidine-rich domain (HRD) stretch occupies residues 584–612 (QKNVPHHHGNGSHHHHHHHHHHHGQHILS). Positions 587 to 608 (VPHHHGNGSHHHHHHHHHHHGQ) are enriched in basic residues. Positions 610–621 (ILSNRTRTRIYN) are enriched in polar residues. Positions 622–659 (SPSTSSSTQDSMDIGNSHHSMTSLSSSTTSSSTSSSST) are enriched in low complexity. Residues 741–750 (CVQQSPVASS) show a composition bias toward polar residues.

This sequence belongs to the protein kinase superfamily. CMGC Ser/Thr protein kinase family. MNB/DYRK subfamily. Post-translationally, autophosphorylated on tyrosine residues.

It is found in the nucleus. Its subcellular location is the nucleus speckle. The enzyme catalyses L-seryl-[protein] + ATP = O-phospho-L-seryl-[protein] + ADP + H(+). The catalysed reaction is L-threonyl-[protein] + ATP = O-phospho-L-threonyl-[protein] + ADP + H(+). It catalyses the reaction L-tyrosyl-[protein] + ATP = O-phospho-L-tyrosyl-[protein] + ADP + H(+). It carries out the reaction [DNA-directed RNA polymerase] + ATP = phospho-[DNA-directed RNA polymerase] + ADP + H(+). In terms of biological role, dual-specificity kinase which possesses both serine/threonine and tyrosine kinase activities. Exhibits a substrate preference for proline at position P+1 and arginine at position P-3. Plays an important role in double-strand breaks (DSBs) repair following DNA damage. Mechanistically, phosphorylates RNF169 and increases its ability to block accumulation of TP53BP1 at the DSB sites thereby promoting homologous recombination repair (HRR). Also acts as a positive regulator of transcription by acting as a CTD kinase that mediates phosphorylation of the CTD (C-terminal domain) of the large subunit of RNA polymerase II (RNAP II) POLR2A. Modulates alternative splicing by phosphorylating the splice factor SRSF6. Phosphorylates SEPTIN4, SEPTIN5 and SF3B1. This is Dual specificity tyrosine-phosphorylation-regulated kinase 1A from Xenopus laevis (African clawed frog).